We begin with the raw amino-acid sequence, 248 residues long: Pyridoxine 5'-phosphate synthase (248 aa).

3-amino-2-oxopropyl phosphate is bound at residue Asn12. Position 14 to 15 (14 to 15 (DH)) interacts with 1-deoxy-D-xylulose 5-phosphate. Arg23 serves as a coordination point for 3-amino-2-oxopropyl phosphate. The active-site Proton acceptor is His48. Positions 50 and 55 each coordinate 1-deoxy-D-xylulose 5-phosphate. The active-site Proton acceptor is Glu75. Thr105 provides a ligand contact to 1-deoxy-D-xylulose 5-phosphate. The Proton donor role is filled by His196. 3-amino-2-oxopropyl phosphate contacts are provided by residues Gly197 and 218-219 (GH).

Belongs to the PNP synthase family. In terms of assembly, homooctamer; tetramer of dimers.

Its subcellular location is the cytoplasm. The catalysed reaction is 3-amino-2-oxopropyl phosphate + 1-deoxy-D-xylulose 5-phosphate = pyridoxine 5'-phosphate + phosphate + 2 H2O + H(+). Its pathway is cofactor biosynthesis; pyridoxine 5'-phosphate biosynthesis; pyridoxine 5'-phosphate from D-erythrose 4-phosphate: step 5/5. Its function is as follows. Catalyzes the complicated ring closure reaction between the two acyclic compounds 1-deoxy-D-xylulose-5-phosphate (DXP) and 3-amino-2-oxopropyl phosphate (1-amino-acetone-3-phosphate or AAP) to form pyridoxine 5'-phosphate (PNP) and inorganic phosphate. The polypeptide is Pyridoxine 5'-phosphate synthase (Pseudomonas paraeruginosa (strain DSM 24068 / PA7) (Pseudomonas aeruginosa (strain PA7))).